Reading from the N-terminus, the 452-residue chain is Cobyrinate a,c-diamide synthase (452 aa).

The region spanning 248-441 (RVAYALDAAF…LHIHFYQNLL (194 aa)) is the GATase cobBQ-type domain. Cysteine 330 functions as the Nucleophile in the catalytic mechanism.

It belongs to the CobB/CbiA family. Mg(2+) serves as cofactor.

It catalyses the reaction cob(II)yrinate + 2 L-glutamine + 2 ATP + 2 H2O = cob(II)yrinate a,c diamide + 2 L-glutamate + 2 ADP + 2 phosphate + 2 H(+). It participates in cofactor biosynthesis; adenosylcobalamin biosynthesis; cob(II)yrinate a,c-diamide from sirohydrochlorin (anaerobic route): step 10/10. Its function is as follows. Catalyzes the ATP-dependent amidation of the two carboxylate groups at positions a and c of cobyrinate, using either L-glutamine or ammonia as the nitrogen source. This Listeria monocytogenes serotype 4b (strain F2365) protein is Cobyrinate a,c-diamide synthase.